The primary structure comprises 178 residues: Translation initiation factor IF-3 (178 aa).

The protein belongs to the IF-3 family. In terms of assembly, monomer.

Its subcellular location is the cytoplasm. Functionally, IF-3 binds to the 30S ribosomal subunit and shifts the equilibrium between 70S ribosomes and their 50S and 30S subunits in favor of the free subunits, thus enhancing the availability of 30S subunits on which protein synthesis initiation begins. The polypeptide is Translation initiation factor IF-3 (Nautilia profundicola (strain ATCC BAA-1463 / DSM 18972 / AmH)).